The primary structure comprises 494 residues: MSVPHGPTPAPVAEPHTQEPGSDKRDGRLSVCTKVCYGIGGVPNQVASSASAFYLQLFLLDVAQIPAAQVSLALFGGKVSGAVADPVAGFFINKSRRTGSGRLMPWALGCMPLIALAYFFLWFLPPFTSLRGLWYTSFYCLFQALATFFQVPYTALTMILTPSPRERDSATAYRMTMEMAGTLMGATVHGLIVSSAHGSQRCEDTVHPRSPAVSPDVARLYCIAAAVVALTYPVCGSLLCLGVKEQPDTSAPASGQGLNFFTGLAITSQHPPYLSLVVSFLFISAAVQVEQSYLVLFCTHASKLQDHVQNLVLIILVSAVLSTPLWEWVLQRFGKKTSAFGICVMVPFSILLAAVPSAPVAYVVAFVSGVSIAVSLLLPWSMLPDVVDDFQLQHRCGPGVETIFYSSYVFFTKLSGAGALGISTLSLEFAGCEAGACQQAEEVVVTLKVLIGAVPTCMILIGLCILLVGPTPKMPRQDTSSQLSLRRRTSYSLA.

Residues 1 to 12 (MSVPHGPTPAPV) show a composition bias toward pro residues. Residues 1 to 26 (MSVPHGPTPAPVAEPHTQEPGSDKRD) form a disordered region. 10 consecutive transmembrane segments (helical) span residues 103–123 (LMPW…FLWF), 140–160 (CLFQ…TMIL), 179–199 (MAGT…AHGS), 223–243 (IAAA…CLGV), 277–297 (VVSF…LVLF), 310–330 (NLVL…EWVL), 339–359 (AFGI…PSAP), 360–380 (VAYV…LLPW), 402–422 (TIFY…ALGI), and 449–469 (VLIG…LLVG). A disordered region spans residues 473–494 (KMPRQDTSSQLSLRRRTSYSLA). A compositionally biased stretch (basic residues) spans 485–494 (LRRRTSYSLA).

Belongs to the major facilitator superfamily. As to expression, widely expressed with highest expression in spleen, lung and testis. Predominantly expressed in erythroid lineages giving rise to erythrocytes and platelets, but absent in lymphoid lineages.

Its subcellular location is the cell membrane. The enzyme catalyses sphing-4-enine 1-phosphate(in) = sphing-4-enine 1-phosphate(out). The catalysed reaction is sphinganine 1-phosphate(in) = sphinganine 1-phosphate(out). It catalyses the reaction sphinga-4E,14Z-dienine-1-phosphate(in) = sphinga-4E,14Z-dienine-1-phosphate(out). In terms of biological role, lipid transporter that specifically mediates export of sphingosine-1-phosphate in red blood cells and platelets. Sphingosine-1-phosphate is a signaling sphingolipid and its export from red blood cells into in the plasma is required for red blood cell morphology. Sphingosine-1-phosphate export from platelets is required for platelet aggregation and thrombus formation. Mediates the export of different sphingosine-1-phosphate (S1P) species, including S1P(d18:0) (sphinganine 1-phosphate), S1P (d18:1) (sphing-4-enine 1-phosphate) and S1P (d18:2) (sphinga-4E,14Z-dienine-1-phosphate). Release of sphingosine-1-phosphate is facilitated by a proton gradient. In contrast, cations, such as sodium, are not required to drive sphingosine-1-phosphate transport. In addition to export, also able to mediate S1P import. Does not transport lysophosphatidylcholine (LPC). The chain is Sphingosine-1-phosphate transporter MFSD2B from Mus musculus (Mouse).